The primary structure comprises 1048 residues: Probable beta-glucosidase E (1048 aa).

The interval 1 to 54 (MPPPPFRDAPSSAKSSQRYTPLHESIPEELNDKQYSSDADSLPLSDPSDGEDDS) is disordered. Residues 1–150 (MPPPPFRDAP…WRTVYYSKYW (150 aa)) lie on the Cytoplasmic side of the membrane. Low complexity predominate over residues 36-47 (SSDADSLPLSDP). A helical; Signal-anchor for type II membrane protein membrane pass occupies residues 151 to 171 (WRALIGVVVVLVLLVLVFLGL). The Extracellular segment spans residues 172–1048 (ARSKQVGDEL…SRDLPLHGKY (877 aa)). Asparagine 216, asparagine 224, and asparagine 410 each carry an N-linked (GlcNAc...) asparagine glycan. Aspartate 438 is an active-site residue. 5 N-linked (GlcNAc...) asparagine glycosylation sites follow: asparagine 481, asparagine 520, asparagine 578, asparagine 895, and asparagine 991. Positions 508–527 (WERPPPDGEGGPNFSSWTDD) are disordered.

Belongs to the glycosyl hydrolase 3 family.

It localises to the cell membrane. It catalyses the reaction Hydrolysis of terminal, non-reducing beta-D-glucosyl residues with release of beta-D-glucose.. It functions in the pathway glycan metabolism; cellulose degradation. In terms of biological role, beta-glucosidases are one of a number of cellulolytic enzymes involved in the degradation of cellulosic biomass. Catalyzes the last step releasing glucose from the inhibitory cellobiose. The sequence is that of Probable beta-glucosidase E (bglE) from Aspergillus oryzae (strain ATCC 42149 / RIB 40) (Yellow koji mold).